A 359-amino-acid polypeptide reads, in one-letter code: Protein PAM71-homolog, chloroplastic (359 aa).

The N-terminal 66 residues, 1–66 (MKLTSLSKNA…DLLWGKFRVR (66 aa)), are a transit peptide targeting the chloroplast. Residues 71–102 (GVGSGSYSGGEEDGSQSSSLDQSPATSSESLK) form a disordered region. Residues 85–98 (SQSSSLDQSPATSS) are compositionally biased toward low complexity. A run of 7 helical transmembrane segments spans residues 110–130 (SLSI…ITFV), 149–169 (AFSL…AALL), 177–197 (LVLL…VVIG), 207–227 (FQTT…FFGL), 269–289 (LTNP…AEWG), 311–331 (GAIA…AFLA), and 339–359 (VGYV…FGVF).

The protein belongs to the GDT1 family.

It localises to the plastid. The protein localises to the chloroplast membrane. Its function is as follows. Probable chloroplast-localized Mn(2+)/H(+) and/or Ca(2+)/H(+) antiporter regulating Ca(2+), Mn(2+) and pH homeostasis. The polypeptide is Protein PAM71-homolog, chloroplastic (Arabidopsis thaliana (Mouse-ear cress)).